We begin with the raw amino-acid sequence, 209 residues long: ATP synthase subunit O, mitochondrial (209 aa).

It belongs to the ATPase delta chain family. As to quaternary structure, F-type ATPases have 2 components, CF(1) - the catalytic core - and CF(0) - the membrane proton channel. CF(1) has five subunits: alpha(3), beta(3), gamma(1), delta(1), epsilon(1). CF(0) has three main subunits: a, b and c.

It localises to the mitochondrion. Its subcellular location is the mitochondrion inner membrane. Functionally, mitochondrial membrane ATP synthase (F(1)F(0) ATP synthase or Complex V) produces ATP from ADP in the presence of a proton gradient across the membrane which is generated by electron transport complexes of the respiratory chain. F-type ATPases consist of two structural domains, F(1) - containing the extramembraneous catalytic core and F(0) - containing the membrane proton channel, linked together by a central stalk and a peripheral stalk. During catalysis, ATP synthesis in the catalytic domain of F(1) is coupled via a rotary mechanism of the central stalk subunits to proton translocation. Part of the complex F(0) domain and the peripheric stalk, which acts as a stator to hold the catalytic alpha(3)beta(3) subcomplex and subunit a/ATP6 static relative to the rotary elements. This chain is ATP synthase subunit O, mitochondrial, found in Drosophila melanogaster (Fruit fly).